Consider the following 183-residue polypeptide: Large ribosomal subunit protein uL5 (183 aa).

Belongs to the universal ribosomal protein uL5 family. Part of the 50S ribosomal subunit; part of the 5S rRNA/L5/L18/L25 subcomplex. Contacts the 5S rRNA and the P site tRNA. Forms a bridge to the 30S subunit in the 70S ribosome.

Functionally, this is one of the proteins that bind and probably mediate the attachment of the 5S RNA into the large ribosomal subunit, where it forms part of the central protuberance. In the 70S ribosome it contacts protein S13 of the 30S subunit (bridge B1b), connecting the 2 subunits; this bridge is implicated in subunit movement. Contacts the P site tRNA; the 5S rRNA and some of its associated proteins might help stabilize positioning of ribosome-bound tRNAs. The chain is Large ribosomal subunit protein uL5 from Tropheryma whipplei (strain TW08/27) (Whipple's bacillus).